The sequence spans 251 residues: Hydroxyacylglutathione hydrolase (251 aa).

Positions 53, 55, 57, 58, 110, 127, and 165 each coordinate Zn(2+).

This sequence belongs to the metallo-beta-lactamase superfamily. Glyoxalase II family. In terms of assembly, monomer. Zn(2+) is required as a cofactor.

The enzyme catalyses an S-(2-hydroxyacyl)glutathione + H2O = a 2-hydroxy carboxylate + glutathione + H(+). Its pathway is secondary metabolite metabolism; methylglyoxal degradation; (R)-lactate from methylglyoxal: step 2/2. In terms of biological role, thiolesterase that catalyzes the hydrolysis of S-D-lactoyl-glutathione to form glutathione and D-lactic acid. The protein is Hydroxyacylglutathione hydrolase of Serratia proteamaculans (strain 568).